Here is a 312-residue protein sequence, read N- to C-terminus: Glyoxylate/hydroxypyruvate reductase A (312 aa).

The active site involves Arg227. His275 functions as the Proton donor in the catalytic mechanism.

It belongs to the D-isomer specific 2-hydroxyacid dehydrogenase family. GhrA subfamily.

It localises to the cytoplasm. The catalysed reaction is glycolate + NADP(+) = glyoxylate + NADPH + H(+). It carries out the reaction (R)-glycerate + NAD(+) = 3-hydroxypyruvate + NADH + H(+). The enzyme catalyses (R)-glycerate + NADP(+) = 3-hydroxypyruvate + NADPH + H(+). Catalyzes the NADPH-dependent reduction of glyoxylate and hydroxypyruvate into glycolate and glycerate, respectively. This Salmonella enteritidis PT4 (strain P125109) protein is Glyoxylate/hydroxypyruvate reductase A.